Reading from the N-terminus, the 89-residue chain is Small ribosomal subunit protein uS15 (89 aa).

The protein belongs to the universal ribosomal protein uS15 family. Part of the 30S ribosomal subunit. Forms a bridge to the 50S subunit in the 70S ribosome, contacting the 23S rRNA.

In terms of biological role, one of the primary rRNA binding proteins, it binds directly to 16S rRNA where it helps nucleate assembly of the platform of the 30S subunit by binding and bridging several RNA helices of the 16S rRNA. Forms an intersubunit bridge (bridge B4) with the 23S rRNA of the 50S subunit in the ribosome. The chain is Small ribosomal subunit protein uS15 from Nitratidesulfovibrio vulgaris (strain DSM 19637 / Miyazaki F) (Desulfovibrio vulgaris).